Consider the following 599-residue polypeptide: Putative sensor histidine kinase NtrY-like (599 aa).

The next 4 membrane-spanning stretches (helical) occupy residues 17–37 (ILILALAISAIVSACTTFYVI), 44–64 (FSTIIGFLLIDLAIFLILGIL), 85–105 (IVIAFSLVAAIPTIIVSVFSV), and 285–305 (IMFIFIALLLLFVAINFGVLF). The region spanning 307 to 361 (AQIVKPIKKLVTATDKVKDGDLTVQVPENEVDKDEIGTLYVAFNRMIKQLSRQQR) is the HAMP domain. Residues 378 to 589 (KVAHEIKNPL…IIDIKFDLKE (212 aa)) form the Histidine kinase domain. H381 is modified (phosphohistidine; by autocatalysis).

It is found in the cell membrane. It catalyses the reaction ATP + protein L-histidine = ADP + protein N-phospho-L-histidine.. Functionally, member of the two-component regulatory system RT0603/RT0550. The sequence is that of Putative sensor histidine kinase NtrY-like from Rickettsia typhi (strain ATCC VR-144 / Wilmington).